We begin with the raw amino-acid sequence, 380 residues long: Ceramide-binding protein svf1 (380 aa).

The tract at residues 1–18 is peripherally associates with membranes; it reads MKAWLQSSISYYTGTAEP.

The protein belongs to the SVF1 family.

The protein localises to the golgi apparatus. Its subcellular location is the cis-Golgi network membrane. It localises to the endoplasmic reticulum membrane. The protein resides in the cytoplasm. It is found in the nucleus. Ceramide-binding protein that may transfer ceramides from the endoplasmic reticulum membrane to the cis-Golgi network membrane, and is thereby required for the biosynthesis of complex sphingolipids. This chain is Ceramide-binding protein svf1, found in Schizosaccharomyces pombe (strain 972 / ATCC 24843) (Fission yeast).